Consider the following 2054-residue polypeptide: Multiple PDZ domain protein (2054 aa).

Residues 3–63 (ETIDKNRALQ…SLQQLKDQVN (61 aa)) form the L27 domain. The 88-residue stretch at 138-225 (IFELLKPPCG…TIQLVIARGS (88 aa)) folds into the PDZ 1 domain. At serine 231 the chain carries Phosphoserine. 4 PDZ domains span residues 258–338 (TIEL…ARGA), 377–463 (DVEL…MRKG), 545–626 (VAHV…CRRT), and 692–778 (AIEL…VAKP). 2 positions are modified to phosphoserine: serine 782 and serine 1065. Positions 995 to 1076 (TVTIAKGSSS…IGPDIKITYV (82 aa)) constitute a PDZ 6 domain. A disordered region spans residues 1110–1129 (PELPEREEGEGEESELQNAA). One can recognise a PDZ 7 domain in the interval 1138–1230 (RVELWREPSK…PVVFMVQSIV (93 aa)). Omega-N-methylarginine is present on arginine 1157. A compositionally biased stretch (polar residues) spans 1261–1273 (LQLTSDKAPSQSE). The segment at 1261–1312 (LQLTSDKAPSQSESESEKATLCSVPSSSPSVFSEMSSDYAQPSATTVAEDED) is disordered. Over residues 1283–1297 (SVPSSSPSVFSEMSS) the composition is skewed to low complexity. The PDZ 8 domain occupies 1337 to 1420 (MIELEKGHSG…KVKIIFIRNA (84 aa)). The disordered stretch occupies residues 1433-1454 (AADPLPSTSESPQNKEVEPSIT). Residues 1470-1551 (HLELPKDQGG…TVKLTVGAEN (82 aa)) form the PDZ 9 domain. Residues 1560-1594 (AAVTASGERKDSSQTPAVPAPDLEPIPSTSRSSTP) form a disordered region. PDZ domains are found at residues 1613 to 1696 (TIEI…YRDE) and 1709 to 1791 (TVEL…GRIK). Residues 1795-1834 (FHSERRPSQSSQVSESSLSSFSLPRSGIHTSESSESSAKK) are disordered. Residues serine 1802 and serine 1808 each carry the phosphoserine modification. Over residues 1802-1834 (SQSSQVSESSLSSFSLPRSGIHTSESSESSAKK) the composition is skewed to low complexity. PDZ domains lie at 1846-1932 (TVEI…VAGG) and 1971-2054 (TITL…MVLS).

As to quaternary structure, interacts with F11R/JAM, CLDN1, NG2, CXADR, CRB1, MPP4 and PALS1, HTR2A, HTR2B, PLEKHA1/TAPP1 and PLEKHA2/TAPP2. Interacts with CXADR. Interacts with HTR2C, CLDN5, DLG4, GRIN1, SYNGAP1, CAMK2A and CAMK2B. Interacts with FAT4 (via cytoplasmic domain). Interacts with DLL1. Abundant in all cerebral cortical layers, especially the piriform cortex, the pyramidal cells of the CA1-CA3 subfields of the hippocampus, as well as the granular layer of the dentate gyrus. Detected in the internal granular layer and the mitral cell layer of the olfactory bulb; in the medial habenular nucleus; and in amygdaloid, thalamic, hypothalamic, and pontine nuclei. In the cerebellum, found at high levels in the granular layer. Detected in the lateral ventricle. Expression overlaps with 5-HT2C receptor expression in all regions of the brain including the choroid plexus, where 5-HT2C receptors are highly enriched.

It is found in the endomembrane system. The protein localises to the cell junction. Its subcellular location is the tight junction. The protein resides in the synapse. It localises to the apical cell membrane. It is found in the postsynaptic density. The protein localises to the cell projection. Its subcellular location is the dendrite. The protein resides in the synaptosome. In terms of biological role, member of the NMDAR signaling complex that may play a role in control of AMPAR potentiation and synaptic plasticity in excitatory synapses. Promotes clustering of HT2RC at the cell surface. This chain is Multiple PDZ domain protein (Mpdz), found in Rattus norvegicus (Rat).